The primary structure comprises 248 residues: DNA repair protein RecO (248 aa).

This sequence belongs to the RecO family.

Involved in DNA repair and RecF pathway recombination. This is DNA repair protein RecO from Streptomyces avermitilis (strain ATCC 31267 / DSM 46492 / JCM 5070 / NBRC 14893 / NCIMB 12804 / NRRL 8165 / MA-4680).